The following is a 167-amino-acid chain: MANGEQTGADGLREKLITINRVAKVVQGGRQFGFTALTVVGDGEGRVGFGYGKAREVPAAIQKAMERARGGMRTVPLDGPTLRYPVTHFHGSSKVFMKPASPGTGIIAGGAMRAVFEVLGVQDVLAKSVGSRNPINVVRATVDGLASMDSPEAVAARRGKSVEEITG.

In terms of domain architecture, S5 DRBM spans 12–75 (LREKLITINR…ERARGGMRTV (64 aa)).

Belongs to the universal ribosomal protein uS5 family. Part of the 30S ribosomal subunit. Contacts proteins S4 and S8.

In terms of biological role, with S4 and S12 plays an important role in translational accuracy. Located at the back of the 30S subunit body where it stabilizes the conformation of the head with respect to the body. This chain is Small ribosomal subunit protein uS5, found in Halorhodospira halophila (strain DSM 244 / SL1) (Ectothiorhodospira halophila (strain DSM 244 / SL1)).